The chain runs to 70 residues: Large ribosomal subunit protein uL30 (70 aa).

Belongs to the universal ribosomal protein uL30 family. Part of the 50S ribosomal subunit.

This chain is Large ribosomal subunit protein uL30, found in Renibacterium salmoninarum (strain ATCC 33209 / DSM 20767 / JCM 11484 / NBRC 15589 / NCIMB 2235).